Reading from the N-terminus, the 230-residue chain is Demethylmenaquinone methyltransferase (230 aa).

S-adenosyl-L-methionine is bound by residues T62, D80, 100 to 101, and S117; that span reads DG.

It belongs to the class I-like SAM-binding methyltransferase superfamily. MenG/UbiE family.

It carries out the reaction a 2-demethylmenaquinol + S-adenosyl-L-methionine = a menaquinol + S-adenosyl-L-homocysteine + H(+). It participates in quinol/quinone metabolism; menaquinone biosynthesis; menaquinol from 1,4-dihydroxy-2-naphthoate: step 2/2. Methyltransferase required for the conversion of demethylmenaquinol (DMKH2) to menaquinol (MKH2). This is Demethylmenaquinone methyltransferase from Corynebacterium glutamicum (strain R).